Consider the following 423-residue polypeptide: Maltooligosaccharide ABC transporter solute-binding lipoprotein (423 aa).

A signal peptide spans 1 to 24 (MSSKFMKSAAVLGTATLASLLLVA). Cysteine 25 carries N-palmitoyl cysteine lipidation. Residue cysteine 25 is the site of S-diacylglycerol cysteine attachment. Substrate is bound by residues tyrosine 52, aspartate 77, aspartate 83, 103–104 (DR), glutamate 148, aspartate 193, asparagine 196, 251–254 (EGAG), tryptophan 274, and lysine 307.

This sequence belongs to the bacterial solute-binding protein 1 family.

The protein resides in the cell membrane. In terms of biological role, part of an ABC transporter complex involved in the uptake of maltodextrins. Binds glycogen-derived linear maltooligosaccharides increasing in size from maltotriose to maltooctaose with the highest affinity for maltotriose. Has a very weak affinity for maltose. Has also a very low affinity for maltotetraitol, indicating that the binding is selective for maltooligosaccharides with an intact reducing end. The protein is Maltooligosaccharide ABC transporter solute-binding lipoprotein of Streptococcus pneumoniae serotype 4 (strain ATCC BAA-334 / TIGR4).